The sequence spans 224 residues: IAP-like protein p27 (224 aa).

A BIR repeat occupies 29-92; that stretch reads VDARNQSFAI…GFWSRNCGFM (64 aa). Residues Cys62, Cys65, His82, and Cys89 each contribute to the Zn(2+) site.

Its function is as follows. Not essential for growth or virulence. Does not have antiapoptotic function. The chain is IAP-like protein p27 (p27) from Ornithodoros (relapsing fever ticks).